Here is a 296-residue protein sequence, read N- to C-terminus: Protoheme IX farnesyltransferase (296 aa).

A run of 9 helical transmembrane segments spans residues 27–47, 48–68, 98–118, 120–140, 148–168, 175–195, 219–239, 242–262, and 274–294; these read IMYL…GTIH, PLIG…AGAL, ALEC…LTVN, VSAI…TMVL, IVIG…SVTG, LLLF…LSLL, HIMG…LYVA, VLYE…AYCL, and CMGL…AIAL.

It belongs to the UbiA prenyltransferase family. Protoheme IX farnesyltransferase subfamily.

The protein localises to the cell inner membrane. The enzyme catalyses heme b + (2E,6E)-farnesyl diphosphate + H2O = Fe(II)-heme o + diphosphate. It functions in the pathway porphyrin-containing compound metabolism; heme O biosynthesis; heme O from protoheme: step 1/1. Converts heme B (protoheme IX) to heme O by substitution of the vinyl group on carbon 2 of heme B porphyrin ring with a hydroxyethyl farnesyl side group. The protein is Protoheme IX farnesyltransferase of Anaplasma phagocytophilum (strain HZ).